Here is a 257-residue protein sequence, read N- to C-terminus: V-type proton ATPase subunit D (257 aa).

Residues 215-257 (KEQEAAQKALEGPGPGEDAAHSENNPPRNLLASEEDNLPVLFN) form a disordered region.

This sequence belongs to the V-ATPase D subunit family. In terms of assembly, V-ATPase is a heteromultimeric enzyme made up of two complexes: the ATP-hydrolytic V1 complex and the proton translocation V0 complex. The V1 complex consists of three catalytic AB heterodimers that form a heterohexamer, three peripheral stalks each consisting of EG heterodimers, one central rotor including subunits D and F, and the regulatory subunits C and H. The proton translocation complex V0 consists of the proton transport subunit a, a ring of proteolipid subunits c9c'', rotary subunit d, subunits e and f, and the accessory subunits vah-19/Ac45 and vah-20/PRR.

In terms of biological role, subunit of the V1 complex of vacuolar(H+)-ATPase (V-ATPase), a multisubunit enzyme composed of a peripheral complex (V1) that hydrolyzes ATP and a membrane integral complex (V0) that translocates protons. V-ATPase is responsible for acidifying and maintaining the pH of intracellular compartments and in some cell types, is targeted to the plasma membrane, where it is responsible for acidifying the extracellular environment. This Caenorhabditis elegans protein is V-type proton ATPase subunit D.